Here is a 406-residue protein sequence, read N- to C-terminus: L-cysteine:1D-myo-inositol 2-amino-2-deoxy-alpha-D-glucopyranoside ligase (406 aa).

Cysteine 45 lines the Zn(2+) pocket. L-cysteinyl-5'-AMP is bound by residues 45-48 (CGIT), threonine 60, and 83-85 (NIT). The 'HIGH' region motif lies at 47-57 (ITPYDATHMGH). Residues 185 to 190 (ERGGDP) carry the 'ERGGDP' region motif. L-cysteinyl-5'-AMP is bound at residue tryptophan 225. Residue cysteine 229 participates in Zn(2+) binding. L-cysteinyl-5'-AMP is bound at residue 247–249 (GSD). Histidine 254 is a binding site for Zn(2+). Position 281 (valine 281) interacts with L-cysteinyl-5'-AMP. A 'KMSKS' region motif is present at residues 287–291 (KMSKS).

Belongs to the class-I aminoacyl-tRNA synthetase family. MshC subfamily. In terms of assembly, monomer. Zn(2+) is required as a cofactor.

It catalyses the reaction 1D-myo-inositol 2-amino-2-deoxy-alpha-D-glucopyranoside + L-cysteine + ATP = 1D-myo-inositol 2-(L-cysteinylamino)-2-deoxy-alpha-D-glucopyranoside + AMP + diphosphate + H(+). In terms of biological role, catalyzes the ATP-dependent condensation of GlcN-Ins and L-cysteine to form L-Cys-GlcN-Ins. This Kribbella flavida (strain DSM 17836 / JCM 10339 / NBRC 14399) protein is L-cysteine:1D-myo-inositol 2-amino-2-deoxy-alpha-D-glucopyranoside ligase.